A 212-amino-acid chain; its full sequence is Cytidylate kinase (212 aa).

G7–T15 is a binding site for ATP.

It belongs to the cytidylate kinase family. Type 1 subfamily.

Its subcellular location is the cytoplasm. The catalysed reaction is CMP + ATP = CDP + ADP. It carries out the reaction dCMP + ATP = dCDP + ADP. The protein is Cytidylate kinase of Nitrobacter winogradskyi (strain ATCC 25391 / DSM 10237 / CIP 104748 / NCIMB 11846 / Nb-255).